The primary structure comprises 207 residues: Uracil phosphoribosyltransferase (207 aa).

5-phospho-alpha-D-ribose 1-diphosphate contacts are provided by residues R77, R102, and 129–137 (DPMLATGGS). Uracil contacts are provided by residues I192 and 197–199 (GDA). A 5-phospho-alpha-D-ribose 1-diphosphate-binding site is contributed by D198.

The protein belongs to the UPRTase family. The cofactor is Mg(2+).

The catalysed reaction is UMP + diphosphate = 5-phospho-alpha-D-ribose 1-diphosphate + uracil. It functions in the pathway pyrimidine metabolism; UMP biosynthesis via salvage pathway; UMP from uracil: step 1/1. Allosterically activated by GTP. Its function is as follows. Catalyzes the conversion of uracil and 5-phospho-alpha-D-ribose 1-diphosphate (PRPP) to UMP and diphosphate. In Mycoplasma mycoides subsp. mycoides SC (strain CCUG 32753 / NCTC 10114 / PG1), this protein is Uracil phosphoribosyltransferase.